A 141-amino-acid chain; its full sequence is Large ribosomal subunit protein uL11 (141 aa).

The protein belongs to the universal ribosomal protein uL11 family. As to quaternary structure, part of the ribosomal stalk of the 50S ribosomal subunit. Interacts with L10 and the large rRNA to form the base of the stalk. L10 forms an elongated spine to which L12 dimers bind in a sequential fashion forming a multimeric L10(L12)X complex. Post-translationally, one or more lysine residues are methylated.

In terms of biological role, forms part of the ribosomal stalk which helps the ribosome interact with GTP-bound translation factors. In Streptococcus uberis (strain ATCC BAA-854 / 0140J), this protein is Large ribosomal subunit protein uL11.